The following is a 390-amino-acid chain: Prostaglandin E2 receptor EP3 subtype (390 aa).

At 1 to 53 (MKETRGYGGDAPFCTRLNHSYTGMWAPERSAEARGNLTRPPGSGEDCGSVSVA) the chain is on the extracellular side. N-linked (GlcNAc...) asparagine glycosylation is found at Asn-18 and Asn-36. A helical membrane pass occupies residues 54–78 (FPITMLLTGFVGNALAMLLVSRSYR). At 79–91 (RRESKRKKSFLLC) the chain is on the cytoplasmic side. The helical transmembrane segment at 92–112 (IGWLALTDLVGQLLTTPVVIV) threads the bilayer. Topologically, residues 113–131 (VYLSKQRWEHIDPSGRLCT) are extracellular. The helical transmembrane segment at 132-153 (FFGLTMTVFGLSSLFIASAMAV) threads the bilayer. At 154–175 (ERALAIRAPHWYASHMKTRATR) the chain is on the cytoplasmic side. A helical membrane pass occupies residues 176–197 (AVLLGVWLAVLAFALLPVLGVG). Over 198 to 227 (QYTVQWPGTWCFISTGRGGNGTSSSHNWGN) the chain is Extracellular. A helical membrane pass occupies residues 228–253 (LFFASAFAFLGLLALTVTFSCNLATI). Topologically, residues 254 to 283 (KALVSRCRAKATASQSSAQWGRITTETAIQ) are cytoplasmic. The chain crosses the membrane as a helical span at residues 284–307 (LMGIMCVLSVCWSPLLIMMLKMIF). Residues 308–327 (NQTSVEHCKTHTEKQKECNF) lie on the Extracellular side of the membrane. Residues 328–349 (FLIAVRLASLNQILDPWVYLLL) form a helical membrane-spanning segment. The Cytoplasmic portion of the chain corresponds to 350–390 (RKILLRKFCQIRYHTNNYASSSTSLPCQCSSTLMWSDHLER).

Belongs to the G-protein coupled receptor 1 family. As to quaternary structure, interacts (via C-terminus) with MKLN1. As to expression, detected in kidney. Expressed in small intestine, heart, pancreas, gastric fundic mucosa, mammary artery and pulmonary vessels.

The protein resides in the cell membrane. Functionally, receptor for prostaglandin E2 (PGE2). The activity of this receptor can couple to both the inhibition of adenylate cyclase mediated by G(i) proteins, and to an elevation of intracellular calcium. Required for normal development of fever in response to pyrinogens, including IL1B, prostaglandin E2 and bacterial lipopolysaccharide (LPS). Required for normal potentiation of platelet aggregation by prostaglandin E2, and thus plays a role in the regulation of blood coagulation. Required for increased HCO3(-) secretion in the duodenum in response to mucosal acidification, and thereby contributes to the protection of the mucosa against acid-induced ulceration. Not required for normal kidney function, normal urine volume and osmolality. The protein is Prostaglandin E2 receptor EP3 subtype (PTGER3) of Homo sapiens (Human).